The primary structure comprises 666 residues: ATP-dependent RNA helicase MSS116, mitochondrial (666 aa).

Residues Met-1–Leu-22 constitute a mitochondrion transit peptide. The span at Arg-38 to Asp-60 shows a compositional bias: basic and acidic residues. Residues Arg-38–Ser-131 are disordered. Residues Asn-120–Ser-131 show a composition bias toward polar residues. The Q motif motif lies at Ser-159–Gln-187. Residues Pro-192–Leu-379 form the Helicase ATP-binding domain. An ATP-binding site is contributed by Ala-205–Thr-212. The DEAD box signature appears at Asp-320–Asp-323. The 153-residue stretch at Asn-408–His-560 folds into the Helicase C-terminal domain.

This sequence belongs to the DEAD box helicase family. DDX18/HAS1 subfamily.

The protein resides in the mitochondrion matrix. It carries out the reaction ATP + H2O = ADP + phosphate + H(+). Functionally, ATP-dependent RNA helicase required for mitochondrial splicing of group I and II introns. Also required for efficient mitochondrial translation. The polypeptide is ATP-dependent RNA helicase MSS116, mitochondrial (MSS116) (Candida glabrata (strain ATCC 2001 / BCRC 20586 / JCM 3761 / NBRC 0622 / NRRL Y-65 / CBS 138) (Yeast)).